The following is a 195-amino-acid chain: Peptidyl-tRNA hydrolase (195 aa).

TRNA is bound at residue tyrosine 14. Histidine 19 serves as the catalytic Proton acceptor. TRNA is bound by residues tyrosine 64 and asparagine 66.

This sequence belongs to the PTH family. In terms of assembly, monomer.

It localises to the cytoplasm. The enzyme catalyses an N-acyl-L-alpha-aminoacyl-tRNA + H2O = an N-acyl-L-amino acid + a tRNA + H(+). Functionally, hydrolyzes ribosome-free peptidyl-tRNAs (with 1 or more amino acids incorporated), which drop off the ribosome during protein synthesis, or as a result of ribosome stalling. In terms of biological role, catalyzes the release of premature peptidyl moieties from peptidyl-tRNA molecules trapped in stalled 50S ribosomal subunits, and thus maintains levels of free tRNAs and 50S ribosomes. The sequence is that of Peptidyl-tRNA hydrolase from Desulforudis audaxviator (strain MP104C).